A 235-amino-acid chain; its full sequence is Replication protein (235 aa).

Tyr-149 is a DNA binding site.

The protein belongs to the Gram-positive plasmids replication protein type 1 family.

Functionally, produces a single-strand nick in a specific site of the plasmid, and this nick results in single-strand replication by rolling circle mechanism. This chain is Replication protein (repB), found in Bacillus sp.